We begin with the raw amino-acid sequence, 444 residues long: Enolase 1 (444 aa).

Residues H165 and E174 each coordinate substrate. The active-site Proton donor is the E217. Residues E303 and D330 each coordinate substrate. Catalysis depends on K355, which acts as the Proton acceptor. Substrate contacts are provided by residues 382-385 (SHRS) and K406.

The protein belongs to the enolase family. As to quaternary structure, homodimer. Mg(2+) serves as cofactor.

Its subcellular location is the cytoplasm. The catalysed reaction is (2R)-2-phosphoglycerate = phosphoenolpyruvate + H2O. It participates in carbohydrate degradation; glycolysis; pyruvate from D-glyceraldehyde 3-phosphate: step 4/5. The chain is Enolase 1 (ENO1) from Toxoplasma gondii.